The primary structure comprises 298 residues: Inosose dehydratase (298 aa).

It belongs to the IolE/MocC family. Requires glutathione as cofactor. Co(2+) serves as cofactor. The cofactor is Mn(2+).

The enzyme catalyses scyllo-inosose = 3D-3,5/4-trihydroxycyclohexane-1,2-dione + H2O. Its function is as follows. Catalyzes the dehydration of inosose (2-keto-myo-inositol, 2KMI or 2,4,6/3,5-pentahydroxycyclohexanone) to 3D-(3,5/4)-trihydroxycyclohexane-1,2-dione (D-2,3-diketo-4-deoxy-epi-inositol). This is Inosose dehydratase from Yersinia enterocolitica serotype O:8 / biotype 1B (strain NCTC 13174 / 8081).